Reading from the N-terminus, the 1409-residue chain is Copia protein (1409 aa).

A CCHC-type zinc finger spans residues 230 to 247; it reads VKCHHCGREGHIKKDCFH. Asp292 functions as the For protease activity in the catalytic mechanism. An Integrase catalytic domain is found at 476 to 644; that stretch reads HIKRPLFVVH…TPYEMWHNKK (169 aa). Disordered regions lie at residues 760–780 and 805–851; these read SKES…QTEF and NESK…NDGI. Residues 827–841 are compositionally biased toward basic and acidic residues; it reads ESRESETAEHLKEIG.

The polypeptide is Copia protein (GIP) (Drosophila melanogaster (Fruit fly)).